The following is a 737-amino-acid chain: Polyribonucleotide nucleotidyltransferase (737 aa).

Positions 489 and 495 each coordinate Mg(2+). Residues 556-615 (PKIDTIKIDVDKIKIVIGKGGETIDKIIAETGVKIDIDEEGNVSIYSSDQDAINRAKEII) enclose the KH domain. The 69-residue stretch at 625-693 (DEVYRAKVVR…EKGRVDASMK (69 aa)) folds into the S1 motif domain. The disordered stretch occupies residues 691-737 (SMKALLPRPPKPERDEKGEKSERPYRPRHHKDHKPKKEITETPKDSE). Composition is skewed to basic and acidic residues over residues 700–715 (PKPE…ERPY) and 725–737 (PKKE…KDSE).

It belongs to the polyribonucleotide nucleotidyltransferase family. Mg(2+) is required as a cofactor.

It is found in the cytoplasm. The catalysed reaction is RNA(n+1) + phosphate = RNA(n) + a ribonucleoside 5'-diphosphate. Involved in mRNA degradation. Catalyzes the phosphorolysis of single-stranded polyribonucleotides processively in the 3'- to 5'-direction. In Streptococcus pneumoniae (strain Hungary19A-6), this protein is Polyribonucleotide nucleotidyltransferase.